Here is a 556-residue protein sequence, read N- to C-terminus: Methyltransferase/ribosomally synthesized type II borosin cyclic peptide precursor pgiMA1 (556 aa).

A methyltransferase domain region spans residues 1 to 250 (MSSASSDSNT…SCSTLYVPPL (250 aa)). Active-site residues include Arg74, Tyr78, and Tyr100. Residues Tyr100, His102, Val105, Gln174, Gly212, Ser243, and Thr244 each coordinate S-adenosyl-L-methionine. Residues 251–377 (THANKFSGNM…GAVFGVMKLR (127 aa)) form a clasp domain region. Residues 378–386 (ASEVANEQG) are precursor leader. Asp421, Asp434, Asp447, Asp460, Asp473, Asp486, Asp499, Asp512, Asp525, and Asp538 each carry N-methylaspartate. A propeptide spanning residues 543-556 (AVPVPDHVAGIPCM) is cleaved from the precursor.

In the N-terminal section; belongs to the precorrin methyltransferase family. As to quaternary structure, homodimer. Post-translationally, pgiMA1 automethylates at Asp-421, Asp-434, Asp-447, Asp-460, Asp-473, Asp-486, Asp-499, Asp-512, Asp-525 and Asp-538 before being processed, probably by the M64 family peptidase found in the genes surrounding PgiMA1, to release methylated peptides which then undergos macrocyclization with the N-terminus of the modified core peptides. Peptide backbone alpha-N-methylations change the physicochemical properties of amide bonds to provide structural constraints and other favorable characteristics including biological membrane permeability to peptides.

It functions in the pathway secondary metabolite biosynthesis. In terms of biological role, fusion protein of the methyltransferase pgiM1 and 12 type II borosin core peptides; part of the gene cluster that mediates the biosynthesis of a type II borosin, a highly methylated cyclic peptide with potent biological activities. Type II borosins derive from the C-terminus of the fusion protein, and it is the same protein that methylates its own C-terminus using S-adenosyl methionine (SAM). The C-terminus is subsequently cleaved off and macrocyclized by a prolyloligopeptidase to give the final product. The polypeptide is Methyltransferase/ribosomally synthesized type II borosin cyclic peptide precursor pgiMA1 (Phlebiopsis gigantea (strain 11061_1 CR5-6) (White-rot fungus)).